We begin with the raw amino-acid sequence, 522 residues long: MTSEITNQMASTKLSDASASTLADWKEGLKAPAKDARPQTEDVTATKGLEFEDFFIKRELMMGIFEAGFEKPSPIQEETIPVALTGRDILARAKNGTGKTAAFVIPTLERVNPKISKTQALILVPTRELALQTSQVCKTLGKHLGINVMVSTGGTGLKDDIIRLSDPVHIIVGTPGRILDLAGKGVADLSTCQTFVMDEADKLLSPEFTPVVEQLLGFHPKDRQVMLFSATFPIVVKTFKDKHMNSPYEINLMDELTLRGITQYYAFVEEKQKVHCLNTLFNKLQINQSIIFCNSTNRVELLAKKITELGYSCFYSHARMLQHNRNRVFHDFRNGVCRNLVCSDLLTRGIDIQAVNVVINFDFPKNAETYLHRIGRSGRFGHLGLAINLINWEDRFNLYRIEQELGTEIQPIPQVIEKNLYVYESPENIPRPISSSQRQPGQQQEQDGTVVRNNQGQNPRGNFRGGRGGGGGGQFQGQRRNPPPGQGQPQQGQGMGQVQQPRQNGQQAQRNPQRQPTGPPQA.

A Q motif motif is present at residues 49 to 77 (LEFEDFFIKRELMMGIFEAGFEKPSPIQE). In terms of domain architecture, Helicase ATP-binding spans 80–250 (IPVALTGRDI…DKHMNSPYEI (171 aa)). 93-100 (AKNGTGKT) lines the ATP pocket. A DEAD box motif is present at residues 198 to 201 (DEAD). Residues 260 to 420 (GITQYYAFVE…PIPQVIEKNL (161 aa)) form the Helicase C-terminal domain. Residues 427-522 (ENIPRPISSS…QRQPTGPPQA (96 aa)) are disordered. Low complexity-rich tracts occupy residues 430-446 (PRPI…QQEQ) and 453-462 (NNQGQNPRGN). The segment covering 463–475 (FRGGRGGGGGGQF) has biased composition (gly residues). Positions 487-516 (GQPQQGQGMGQVQQPRQNGQQAQRNPQRQP) are enriched in low complexity.

It belongs to the DEAD box helicase family. DDX6/DHH1 subfamily.

It is found in the cytoplasm. The protein localises to the P-body. The catalysed reaction is ATP + H2O = ADP + phosphate + H(+). In terms of biological role, ATP-dependent RNA helicase involved in mRNA turnover, and more specifically in mRNA decapping. Is involved in G1/S DNA-damage checkpoint recovery, probably through the regulation of the translational status of a subset of mRNAs. May also have a role in translation and mRNA nuclear export. In Phaeosphaeria nodorum (strain SN15 / ATCC MYA-4574 / FGSC 10173) (Glume blotch fungus), this protein is ATP-dependent RNA helicase DHH1 (DHH1).